The sequence spans 456 residues: tRNA modification GTPase MnmE (456 aa).

(6S)-5-formyl-5,6,7,8-tetrahydrofolate contacts are provided by arginine 24, glutamate 81, and lysine 120. The TrmE-type G domain occupies 216–379 (GMTVVIAGRP…LRDHLKACMG (164 aa)). Asparagine 226 provides a ligand contact to K(+). Residues 226–231 (NAGKSS), 245–251 (TAIAGTT), 270–273 (DTAG), and 335–338 (NKAD) contribute to the GTP site. Serine 230 provides a ligand contact to Mg(2+). Positions 245, 247, and 250 each coordinate K(+). Position 251 (threonine 251) interacts with Mg(2+). Lysine 456 provides a ligand contact to (6S)-5-formyl-5,6,7,8-tetrahydrofolate.

It belongs to the TRAFAC class TrmE-Era-EngA-EngB-Septin-like GTPase superfamily. TrmE GTPase family. Homodimer. Heterotetramer of two MnmE and two MnmG subunits. K(+) serves as cofactor.

It localises to the cytoplasm. Functionally, exhibits a very high intrinsic GTPase hydrolysis rate. Involved in the addition of a carboxymethylaminomethyl (cmnm) group at the wobble position (U34) of certain tRNAs, forming tRNA-cmnm(5)s(2)U34. This is tRNA modification GTPase MnmE from Pseudomonas putida (strain W619).